The following is a 228-amino-acid chain: Calcyclin-binding protein (228 aa).

N-acetylmethionine is present on methionine 1. Alanine 2 bears the N-acetylalanine mark. An interaction with SIAH1 region spans residues 2-80; it reads ASEELQKDLE…YTVKISNYGW (79 aa). A Phosphoserine modification is found at serine 3. Residues lysine 8 and lysine 19 each carry the N6-acetyllysine modification. Position 34 is a phosphoserine (serine 34). One can recognise a CS domain in the interval 73 to 167; sequence VKISNYGWDQ…VENTRWDYLT (95 aa). The interaction with SKP1 stretch occupies residues 73–228; the sequence is VKISNYGWDQ…EKQAKGDTEF (156 aa). N6-acetyllysine occurs at positions 85 and 118. The segment at 154–228 is interaction with S100A6; it reads CRKKVENTRW…EKQAKGDTEF (75 aa). The 61-residue stretch at 168-228 folds into the SGS domain; that stretch reads QVEKECKEKE…EKQAKGDTEF (61 aa).

Homodimer. Interacts with proteins of the S100 family S100A1, S100A6, S100B, S100P and S100A12 in a calcium-dependent manner. Component of some large E3 complex at least composed of UBE2D1, SIAH1, CACYBP/SIP, SKP1, APC and TBL1X. Interacts directly with SIAH1, SIAH2 and SKP1. Post-translationally, phosphorylated on serine residues. Phosphorylated upon induction by RA or at high calcium concentrations.

It localises to the nucleus. It is found in the cytoplasm. In terms of biological role, may be involved in calcium-dependent ubiquitination and subsequent proteasomal degradation of target proteins. Probably serves as a molecular bridge in ubiquitin E3 complexes. Participates in the ubiquitin-mediated degradation of beta-catenin (CTNNB1). In Homo sapiens (Human), this protein is Calcyclin-binding protein (CACYBP).